Consider the following 451-residue polypeptide: Probable D-serine dehydratase (451 aa).

The residue at position 119 (K119) is an N6-(pyridoxal phosphate)lysine.

The protein belongs to the serine/threonine dehydratase family. DsdA subfamily. Pyridoxal 5'-phosphate is required as a cofactor.

The catalysed reaction is D-serine = pyruvate + NH4(+). This chain is Probable D-serine dehydratase, found in Acidovorax ebreus (strain TPSY) (Diaphorobacter sp. (strain TPSY)).